The chain runs to 318 residues: Ribosomal RNA small subunit methyltransferase A (318 aa).

Residues N40, V42, G67, E88, D118, and N137 each coordinate S-adenosyl-L-methionine. Basic and acidic residues predominate over residues 295–305 (SADRGGTDREG). The interval 295 to 318 (SADRGGTDREGTSPPTAGQGAPAR) is disordered.

The protein belongs to the class I-like SAM-binding methyltransferase superfamily. rRNA adenine N(6)-methyltransferase family. RsmA subfamily.

It is found in the cytoplasm. The enzyme catalyses adenosine(1518)/adenosine(1519) in 16S rRNA + 4 S-adenosyl-L-methionine = N(6)-dimethyladenosine(1518)/N(6)-dimethyladenosine(1519) in 16S rRNA + 4 S-adenosyl-L-homocysteine + 4 H(+). Its function is as follows. Specifically dimethylates two adjacent adenosines (A1518 and A1519) in the loop of a conserved hairpin near the 3'-end of 16S rRNA in the 30S particle. May play a critical role in biogenesis of 30S subunits. The polypeptide is Ribosomal RNA small subunit methyltransferase A (Mycolicibacterium paratuberculosis (strain ATCC BAA-968 / K-10) (Mycobacterium paratuberculosis)).